Here is a 327-residue protein sequence, read N- to C-terminus: MSESEKIKKVSIVIPVYNEQESLPILIERTSAACKLLTQPYEIILVDDGSSDNSAELLTAAANEPESHIIAVLLNRNYGQHSAIMAGFNQVSGDLIITLDADLQNPPEEIPRLVSVAEEGYDVVGTVRAHRQDSLFRKTASRMINMMIQRATGKSMGDYGCMLRAYRRHIVEAMLHCHERSTFIPILANTFARRTTEITVHHAEREFGDSKYSLMKLINLMYDLITCLTTTPLRLLSLVGSVIALSGFTLAVLLVVLRLVFGPEWAGGGVFTLFAVLFMFIGAQFVGMGLLGEYIGRIYNDVRARPRYFIQKVVGAEQTENNQEVEK.

Transmembrane regions (helical) follow at residues 236 to 256 (LSLV…LLVV) and 270 to 290 (VFTL…GMGL).

Belongs to the glycosyltransferase 2 family.

The protein localises to the cell inner membrane. It carries out the reaction UDP-4-deoxy-4-formamido-beta-L-arabinose + di-trans,octa-cis-undecaprenyl phosphate = 4-deoxy-4-formamido-alpha-L-arabinopyranosyl di-trans,octa-cis-undecaprenyl phosphate + UDP. The protein operates within glycolipid biosynthesis; 4-amino-4-deoxy-alpha-L-arabinose undecaprenyl phosphate biosynthesis; 4-amino-4-deoxy-alpha-L-arabinose undecaprenyl phosphate from UDP-4-deoxy-4-formamido-beta-L-arabinose and undecaprenyl phosphate: step 1/2. It functions in the pathway bacterial outer membrane biogenesis; lipopolysaccharide biosynthesis. Functionally, catalyzes the transfer of 4-deoxy-4-formamido-L-arabinose from UDP to undecaprenyl phosphate. The modified arabinose is attached to lipid A and is required for resistance to polymyxin and cationic antimicrobial peptides. The protein is Undecaprenyl-phosphate 4-deoxy-4-formamido-L-arabinose transferase of Yersinia enterocolitica serotype O:8 / biotype 1B (strain NCTC 13174 / 8081).